The following is an 86-amino-acid chain: U15-lycotoxin-Ls1g (86 aa).

Residues 1 to 20 (MNSKIFAVLLLLGLLSCVLS) form the signal peptide. A WAP domain is found at 21-66 (DQYCPKSSITACKKMNIRNDCCKDDDCTGGSWCCATPCGNFCKYPA). Intrachain disulfides connect Cys24/Cys54, Cys32/Cys58, Cys41/Cys53, Cys42/Cys80, and Cys47/Cys62.

The protein belongs to the venom protein 11 family. 01 (wap-1) subfamily. In terms of processing, contains 5 disulfide bonds. As to expression, expressed by the venom gland.

The protein resides in the secreted. Has antibacterial activity. This chain is U15-lycotoxin-Ls1g, found in Lycosa singoriensis (Wolf spider).